The sequence spans 265 residues: Chlorophyll a-b binding protein 1A, chloroplastic (265 aa).

The transit peptide at 1–34 (MAAAAMALSSPSFAGQAVKLSPSASENSGNGRIT) directs the protein to the chloroplast. Residues 151–171 (LVHAQSILAIWACQVVLMGAV) form a helical membrane-spanning segment. Residues valine 152, serine 156, glutamine 164, glutamate 172, arginine 175, and leucine 181 each contribute to the chlorophyll b site. Chlorophyll a is bound by residues lysine 212, glutamate 213, asparagine 216, arginine 218, glutamine 230, histidine 245, and alanine 254. The chain crosses the membrane as a helical span at residues 219–239 (LAMFSMFGFFVQAIVTGKGPL). Residue phenylalanine 261 coordinates chlorophyll b.

This sequence belongs to the light-harvesting chlorophyll a/b-binding (LHC) protein family. As to quaternary structure, the LHC complex consists of chlorophyll a-b binding proteins. Requires Binds at least 14 chlorophylls (8 Chl-a and 6 Chl-b) and carotenoids such as lutein and neoxanthin. as cofactor. Photoregulated by reversible phosphorylation of its threonine residues.

The protein localises to the plastid. It localises to the chloroplast thylakoid membrane. Functionally, the light-harvesting complex (LHC) functions as a light receptor, it captures and delivers excitation energy to photosystems with which it is closely associated. In Solanum lycopersicum (Tomato), this protein is Chlorophyll a-b binding protein 1A, chloroplastic (CAB1A).